The chain runs to 491 residues: Katanin p60 ATPase-containing subunit A1 (491 aa).

Residues 1–29 (MSLQMIVENVKLAREYALLGNYDSAMVYY) are interaction with KATNB1. Positions 1–75 (MSLQMIVENV…VKDIMKTLES (75 aa)) are interaction with dynein and NDEL1. Residues 1 to 185 (MSLQMIVENV…EPEANKFDGT (185 aa)) are interaction with microtubules; sufficient for microtubule severing activity. Ser42 carries the post-translational modification Phosphoserine; by DYRK2. The disordered stretch occupies residues 101–182 (PVPVERRPLP…AVTEPEANKF (82 aa)). Basic and acidic residues predominate over residues 145–169 (HNDRGKAVRSREKKEQSKGREEKNK). 249–256 (GPPGTGKT) contributes to the ATP binding site.

The protein belongs to the AAA ATPase family. Katanin p60 subunit A1 subfamily. In terms of assembly, can homooligomerize into hexameric rings, which may be promoted by interaction with microtubules. Interacts with KATNB1, which may serve as a targeting subunit. Interacts with ASPM; the katanin complex formation KATNA1:KATNB1 is required for the association of ASPM. Interacts with dynein and NDEL1. Associates with the E3 ligase complex containing DYRK2, EDD/UBR5, DDB1 and DCAF1 proteins (EDVP complex). Interacts with KLHL42 (via the kelch domains). Interacts with CUL3; the interaction is enhanced by KLHL42. Interacts with KATNB1 and KATNBL1. Interacts with CAMSAP2 and CAMSAP3; leading to regulate the length of CAMSAP-decorated microtubule stretches. Post-translationally, phosphorylation by DYRK2 triggers ubiquitination and subsequent degradation. In terms of processing, ubiquitinated by the BCR(KLHL42) E3 ubiquitin ligase complex, leading to its proteasomal degradation. Ubiquitinated by the EDVP E3 ligase complex and subsequently targeted for proteasomal degradation.

The protein localises to the cytoplasm. Its subcellular location is the midbody. It is found in the cytoskeleton. It localises to the microtubule organizing center. The protein resides in the centrosome. The protein localises to the spindle pole. Its subcellular location is the spindle. The enzyme catalyses n ATP + n H2O + a microtubule = n ADP + n phosphate + (n+1) alpha/beta tubulin heterodimers.. With respect to regulation, ATPase activity is stimulated by microtubules, which promote homooligomerization. ATP-dependent microtubule severing is stimulated by interaction with KATNB1. Its function is as follows. Catalytic subunit of a complex which severs microtubules in an ATP-dependent manner. Microtubule severing may promote rapid reorganization of cellular microtubule arrays and the release of microtubules from the centrosome following nucleation. Microtubule release from the mitotic spindle poles may allow depolymerization of the microtubule end proximal to the spindle pole, leading to poleward microtubule flux and poleward motion of chromosome. The function in regulating microtubule dynamics at spindle poles seems to depend on the association of the katanin KATNA1:KATNB1 complex with ASPM which recruits it to microtubules. Reversely KATNA1:KATNB1 can enhance ASPM blocking activity on microtubule minus-end growth. Microtubule release within the cell body of neurons may be required for their transport into neuronal processes by microtubule-dependent motor proteins. This transport is required for axonal growth. The sequence is that of Katanin p60 ATPase-containing subunit A1 (Katna1) from Mus musculus (Mouse).